Consider the following 389-residue polypeptide: uncharacterized protein (389 aa).

The signal sequence occupies residues 1–29; it reads MQPSFTPSGGKWLSIAVILLVIGLVVGFA.

It belongs to the bacterial solute-binding protein 1 family. WtpA subfamily.

This is an uncharacterized protein from Thermoplasma volcanium (strain ATCC 51530 / DSM 4299 / JCM 9571 / NBRC 15438 / GSS1).